The following is a 237-amino-acid chain: tRNA-splicing endonuclease subunit Sen2-1 (237 aa).

Catalysis depends on residues Y148, H156, and K190.

It belongs to the tRNA-intron endonuclease family. TRNA splicing endonuclease is a heterotetramer composed of SEN2, SEN15, SEN34/LENG5 and SEN54.

Its subcellular location is the nucleus. It catalyses the reaction pretRNA = a 3'-half-tRNA molecule with a 5'-OH end + a 5'-half-tRNA molecule with a 2',3'-cyclic phosphate end + an intron with a 2',3'-cyclic phosphate and a 5'-hydroxyl terminus.. Constitutes one of the two catalytic subunit of the tRNA-splicing endonuclease complex, a complex responsible for identification and cleavage of the splice sites in pre-tRNA. It cleaves pre-tRNA at the 5'- and 3'-splice sites to release the intron. The products are an intron and two tRNA half-molecules bearing 2',3'-cyclic phosphate and 5'-OH termini. There are no conserved sequences at the splice sites, but the intron is invariably located at the same site in the gene, placing the splice sites an invariant distance from the constant structural features of the tRNA body. Probably carries the active site for 5'-splice site cleavage. The polypeptide is tRNA-splicing endonuclease subunit Sen2-1 (SEN1) (Arabidopsis thaliana (Mouse-ear cress)).